The chain runs to 430 residues: Adenylosuccinate synthetase (430 aa).

Residues 13-19 (GDEGKGK) and 41-43 (GHT) contribute to the GTP site. Asp-14 acts as the Proton acceptor in catalysis. Asp-14 and Gly-41 together coordinate Mg(2+). IMP-binding positions include 14–17 (DEGK), 39–42 (NAGH), Thr-130, Arg-144, Gln-225, Thr-240, and Arg-304. His-42 (proton donor) is an active-site residue. A substrate-binding site is contributed by 300-306 (STTGRAR). GTP contacts are provided by residues Arg-306, 332–334 (KLD), and 414–416 (STG).

It belongs to the adenylosuccinate synthetase family. Homodimer. Mg(2+) is required as a cofactor.

Its subcellular location is the cytoplasm. The catalysed reaction is IMP + L-aspartate + GTP = N(6)-(1,2-dicarboxyethyl)-AMP + GDP + phosphate + 2 H(+). Its pathway is purine metabolism; AMP biosynthesis via de novo pathway; AMP from IMP: step 1/2. In terms of biological role, plays an important role in the de novo pathway of purine nucleotide biosynthesis. Catalyzes the first committed step in the biosynthesis of AMP from IMP. The sequence is that of Adenylosuccinate synthetase from Pseudomonas putida (strain ATCC 700007 / DSM 6899 / JCM 31910 / BCRC 17059 / LMG 24140 / F1).